Here is a 115-residue protein sequence, read N- to C-terminus: Double-headed protease inhibitor, submandibular gland (115 aa).

2 Kazal-like domains span residues 6–66 and 67–115; these read IGRE…ACDI and ECTE…HGEC. 6 disulfides stabilise this stretch: Cys-12-Cys-46, Cys-24-Cys-43, Cys-32-Cys-64, Cys-68-Cys-97, Cys-75-Cys-94, and Cys-83-Cys-115.

The protein localises to the secreted. In terms of biological role, this inhibitor is composed of two homologous actively inhibiting halves: one which inhibits trypsin, the other which inhibits elastase. In Vulpes vulpes (Red fox), this protein is Double-headed protease inhibitor, submandibular gland.